Here is an 88-residue protein sequence, read N- to C-terminus: MSESSSIKRTLIGRVVSDKMDKTVTVLVERKVKHPMYGKVMVRSKKYHAHNEGNSAKAGDLVEIVETRPVSRTKTWAVTSVLEKAIVV.

It belongs to the universal ribosomal protein uS17 family. As to quaternary structure, part of the 30S ribosomal subunit.

Functionally, one of the primary rRNA binding proteins, it binds specifically to the 5'-end of 16S ribosomal RNA. The chain is Small ribosomal subunit protein uS17 from Dechloromonas aromatica (strain RCB).